Here is a 122-residue protein sequence, read N- to C-terminus: Protein FAM223A (122 aa).

Belongs to the FAM223 family.

The sequence is that of Protein FAM223A (FAM223A) from Homo sapiens (Human).